The sequence spans 558 residues: Formate--tetrahydrofolate ligase (558 aa).

66-73 (TPAGEGKT) lines the ATP pocket.

It belongs to the formate--tetrahydrofolate ligase family.

The enzyme catalyses (6S)-5,6,7,8-tetrahydrofolate + formate + ATP = (6R)-10-formyltetrahydrofolate + ADP + phosphate. It participates in one-carbon metabolism; tetrahydrofolate interconversion. This Neisseria meningitidis serogroup B (strain ATCC BAA-335 / MC58) protein is Formate--tetrahydrofolate ligase.